The primary structure comprises 298 residues: Lipoyl synthase 1 (298 aa).

Residues C34, C39, C45, C60, C64, C67, and S274 each coordinate [4Fe-4S] cluster. Residues 46–263 (FYQGTATFLM…RRLGESMGFL (218 aa)) form the Radical SAM core domain.

Belongs to the radical SAM superfamily. Lipoyl synthase family. The cofactor is [4Fe-4S] cluster.

The protein resides in the cytoplasm. The enzyme catalyses [[Fe-S] cluster scaffold protein carrying a second [4Fe-4S](2+) cluster] + N(6)-octanoyl-L-lysyl-[protein] + 2 oxidized [2Fe-2S]-[ferredoxin] + 2 S-adenosyl-L-methionine + 4 H(+) = [[Fe-S] cluster scaffold protein] + N(6)-[(R)-dihydrolipoyl]-L-lysyl-[protein] + 4 Fe(3+) + 2 hydrogen sulfide + 2 5'-deoxyadenosine + 2 L-methionine + 2 reduced [2Fe-2S]-[ferredoxin]. Its pathway is protein modification; protein lipoylation via endogenous pathway; protein N(6)-(lipoyl)lysine from octanoyl-[acyl-carrier-protein]: step 2/2. In terms of biological role, catalyzes the radical-mediated insertion of two sulfur atoms into the C-6 and C-8 positions of the octanoyl moiety bound to the lipoyl domains of lipoate-dependent enzymes, thereby converting the octanoylated domains into lipoylated derivatives. This Thermosynechococcus vestitus (strain NIES-2133 / IAM M-273 / BP-1) protein is Lipoyl synthase 1.